A 620-amino-acid chain; its full sequence is Translation initiation factor IF-2 (620 aa).

The tr-type G domain maps to Glu-119–Leu-288. Residues Gly-128–Thr-135 form a G1 region. Gly-128–Thr-135 contributes to the GTP binding site. The interval Gly-153–Ala-157 is G2. The interval Asp-175–Gly-178 is G3. GTP-binding positions include Asp-175 to His-179 and Asn-229 to Asp-232. The interval Asn-229 to Asp-232 is G4. The interval Ser-265–Ile-267 is G5.

This sequence belongs to the TRAFAC class translation factor GTPase superfamily. Classic translation factor GTPase family. IF-2 subfamily.

It localises to the cytoplasm. Functionally, one of the essential components for the initiation of protein synthesis. Protects formylmethionyl-tRNA from spontaneous hydrolysis and promotes its binding to the 30S ribosomal subunits. Also involved in the hydrolysis of GTP during the formation of the 70S ribosomal complex. The polypeptide is Translation initiation factor IF-2 (Mycoplasma capricolum subsp. capricolum (strain California kid / ATCC 27343 / NCTC 10154)).